The chain runs to 689 residues: Glycine--tRNA ligase beta subunit (689 aa).

This sequence belongs to the class-II aminoacyl-tRNA synthetase family. In terms of assembly, tetramer of two alpha and two beta subunits.

It localises to the cytoplasm. It catalyses the reaction tRNA(Gly) + glycine + ATP = glycyl-tRNA(Gly) + AMP + diphosphate. The polypeptide is Glycine--tRNA ligase beta subunit (Shigella dysenteriae serotype 1 (strain Sd197)).